The following is a 355-amino-acid chain: MADIPADRKKIVQEGWSRLFSDIEQPSYIQKFPSQESLYVSFFEQCAFDDFDLTLLRFLKARKFVVTDSSDMLANAIVWRQQANLRSIMVRGENGLNQNFVKASMYFIWGQDKKGRAIVFLNLHNFIPPKNTKDMEELKALILYAMENARLFLDSEQNAAKGVLGLVDLTYFSRKNIDLDFARVFAETFQNYYPEILGQALIVGSGFRMALFEGVWSIGKYFLDPEVRSKVTFCKPAQVSGYVDSKYIPLSMHGQFDETKLYERAPPETAGIGKPENYEELDKEYVDAAKEFIRLTREWIYAAGKPQEAEIEEKRKAFKYECKKLWRKGVALRPPNIYQRLGLIDANGHVDWSKA.

A CRAL-TRIO domain is found at 93–260 (ENGLNQNFVK…SMHGQFDETK (168 aa)).

The protein is CRAL-TRIO domain-containing protein C365.01 of Schizosaccharomyces pombe (strain 972 / ATCC 24843) (Fission yeast).